The following is a 173-amino-acid chain: Large ribosomal subunit protein bL9 (173 aa).

The protein belongs to the bacterial ribosomal protein bL9 family.

Its function is as follows. Binds to the 23S rRNA. The sequence is that of Large ribosomal subunit protein bL9 from Rickettsia bellii (strain RML369-C).